The primary structure comprises 380 residues: Queuine tRNA-ribosyltransferase (380 aa).

Aspartate 96 serves as the catalytic Proton acceptor. Residues 96–100 (DSGGF), aspartate 150, glutamine 193, and glycine 220 each bind substrate. Residues 251-257 (GVGAPDS) are RNA binding. Aspartate 270 (nucleophile) is an active-site residue. The RNA binding; important for wobble base 34 recognition stretch occupies residues 275–279 (TRIAR). Cysteine 308, cysteine 310, cysteine 313, and histidine 339 together coordinate Zn(2+).

This sequence belongs to the queuine tRNA-ribosyltransferase family. As to quaternary structure, homodimer. Within each dimer, one monomer is responsible for RNA recognition and catalysis, while the other monomer binds to the replacement base PreQ1. Requires Zn(2+) as cofactor.

The enzyme catalyses 7-aminomethyl-7-carbaguanine + guanosine(34) in tRNA = 7-aminomethyl-7-carbaguanosine(34) in tRNA + guanine. It functions in the pathway tRNA modification; tRNA-queuosine biosynthesis. Functionally, catalyzes the base-exchange of a guanine (G) residue with the queuine precursor 7-aminomethyl-7-deazaguanine (PreQ1) at position 34 (anticodon wobble position) in tRNAs with GU(N) anticodons (tRNA-Asp, -Asn, -His and -Tyr). Catalysis occurs through a double-displacement mechanism. The nucleophile active site attacks the C1' of nucleotide 34 to detach the guanine base from the RNA, forming a covalent enzyme-RNA intermediate. The proton acceptor active site deprotonates the incoming PreQ1, allowing a nucleophilic attack on the C1' of the ribose to form the product. After dissociation, two additional enzymatic reactions on the tRNA convert PreQ1 to queuine (Q), resulting in the hypermodified nucleoside queuosine (7-(((4,5-cis-dihydroxy-2-cyclopenten-1-yl)amino)methyl)-7-deazaguanosine). The sequence is that of Queuine tRNA-ribosyltransferase from Streptococcus gordonii (strain Challis / ATCC 35105 / BCRC 15272 / CH1 / DL1 / V288).